We begin with the raw amino-acid sequence, 132 residues long: Small ribosomal subunit protein uS8 (132 aa).

This sequence belongs to the universal ribosomal protein uS8 family. In terms of assembly, part of the 30S ribosomal subunit. Contacts proteins S5 and S12.

Its function is as follows. One of the primary rRNA binding proteins, it binds directly to 16S rRNA central domain where it helps coordinate assembly of the platform of the 30S subunit. This chain is Small ribosomal subunit protein uS8, found in Maricaulis maris (strain MCS10) (Caulobacter maris).